A 364-amino-acid polypeptide reads, in one-letter code: UDP-N-acetylglucosamine--N-acetylmuramyl-(pentapeptide) pyrophosphoryl-undecaprenol N-acetylglucosamine transferase (364 aa).

UDP-N-acetyl-alpha-D-glucosamine contacts are provided by residues 15-17 (TGG), Asn123, Arg164, Ser191, and Gln286.

Belongs to the glycosyltransferase 28 family. MurG subfamily.

It is found in the cell inner membrane. It catalyses the reaction di-trans,octa-cis-undecaprenyl diphospho-N-acetyl-alpha-D-muramoyl-L-alanyl-D-glutamyl-meso-2,6-diaminopimeloyl-D-alanyl-D-alanine + UDP-N-acetyl-alpha-D-glucosamine = di-trans,octa-cis-undecaprenyl diphospho-[N-acetyl-alpha-D-glucosaminyl-(1-&gt;4)]-N-acetyl-alpha-D-muramoyl-L-alanyl-D-glutamyl-meso-2,6-diaminopimeloyl-D-alanyl-D-alanine + UDP + H(+). Its pathway is cell wall biogenesis; peptidoglycan biosynthesis. Cell wall formation. Catalyzes the transfer of a GlcNAc subunit on undecaprenyl-pyrophosphoryl-MurNAc-pentapeptide (lipid intermediate I) to form undecaprenyl-pyrophosphoryl-MurNAc-(pentapeptide)GlcNAc (lipid intermediate II). The polypeptide is UDP-N-acetylglucosamine--N-acetylmuramyl-(pentapeptide) pyrophosphoryl-undecaprenol N-acetylglucosamine transferase (Prochlorococcus marinus subsp. pastoris (strain CCMP1986 / NIES-2087 / MED4)).